The following is a 317-amino-acid chain: Protein PXR1 (317 aa).

In terms of domain architecture, G-patch spans Thr25–Arg79. A disordered region spans residues Glu152–Thr268. The span at Ala154–Gln170 shows a compositional bias: basic and acidic residues. The span at Lys171 to Ser182 shows a compositional bias: basic residues. Positions Arg192 to Pro219 are enriched in polar residues. A compositionally biased stretch (basic residues) spans Ser224–Arg236.

This sequence belongs to the PINX1 family.

The protein localises to the nucleus. It localises to the nucleolus. In terms of biological role, involved in rRNA-processing at A0, A1 and A2 sites and negatively regulates telomerase. The chain is Protein PXR1 (PXR1) from Coccidioides immitis (strain RS) (Valley fever fungus).